The sequence spans 251 residues: Triosephosphate isomerase (251 aa).

12–14 (NWK) is a binding site for substrate. The Electrophile role is filled by His98. Glu168 acts as the Proton acceptor in catalysis. Substrate is bound by residues Gly174, Ser213, and 234-235 (GG).

The protein belongs to the triosephosphate isomerase family. As to quaternary structure, homodimer.

Its subcellular location is the cytoplasm. It catalyses the reaction D-glyceraldehyde 3-phosphate = dihydroxyacetone phosphate. It functions in the pathway carbohydrate biosynthesis; gluconeogenesis. Its pathway is carbohydrate degradation; glycolysis; D-glyceraldehyde 3-phosphate from glycerone phosphate: step 1/1. Functionally, involved in the gluconeogenesis. Catalyzes stereospecifically the conversion of dihydroxyacetone phosphate (DHAP) to D-glyceraldehyde-3-phosphate (G3P). The chain is Triosephosphate isomerase from Afipia carboxidovorans (strain ATCC 49405 / DSM 1227 / KCTC 32145 / OM5) (Oligotropha carboxidovorans).